The chain runs to 523 residues: Bifunctional purine biosynthesis protein PurH (523 aa).

An MGS-like domain is found at 1–145 (MIKQALLSVS…KNHRDVTVIV (145 aa)).

Belongs to the PurH family.

It catalyses the reaction (6R)-10-formyltetrahydrofolate + 5-amino-1-(5-phospho-beta-D-ribosyl)imidazole-4-carboxamide = 5-formamido-1-(5-phospho-D-ribosyl)imidazole-4-carboxamide + (6S)-5,6,7,8-tetrahydrofolate. The catalysed reaction is IMP + H2O = 5-formamido-1-(5-phospho-D-ribosyl)imidazole-4-carboxamide. Its pathway is purine metabolism; IMP biosynthesis via de novo pathway; 5-formamido-1-(5-phospho-D-ribosyl)imidazole-4-carboxamide from 5-amino-1-(5-phospho-D-ribosyl)imidazole-4-carboxamide (10-formyl THF route): step 1/1. The protein operates within purine metabolism; IMP biosynthesis via de novo pathway; IMP from 5-formamido-1-(5-phospho-D-ribosyl)imidazole-4-carboxamide: step 1/1. The protein is Bifunctional purine biosynthesis protein PurH of Cupriavidus pinatubonensis (strain JMP 134 / LMG 1197) (Cupriavidus necator (strain JMP 134)).